The following is a 306-amino-acid chain: tRNA dimethylallyltransferase (306 aa).

11-18 (APTAAGKT) serves as a coordination point for ATP. A substrate-binding site is contributed by 13 to 18 (TAAGKT).

The protein belongs to the IPP transferase family. Monomer. It depends on Mg(2+) as a cofactor.

The catalysed reaction is adenosine(37) in tRNA + dimethylallyl diphosphate = N(6)-dimethylallyladenosine(37) in tRNA + diphosphate. Its function is as follows. Catalyzes the transfer of a dimethylallyl group onto the adenine at position 37 in tRNAs that read codons beginning with uridine, leading to the formation of N6-(dimethylallyl)adenosine (i(6)A). The chain is tRNA dimethylallyltransferase from Deinococcus radiodurans (strain ATCC 13939 / DSM 20539 / JCM 16871 / CCUG 27074 / LMG 4051 / NBRC 15346 / NCIMB 9279 / VKM B-1422 / R1).